The sequence spans 452 residues: Cobyrinate a,c-diamide synthase (452 aa).

Positions 244-429 (RIAVARDRAF…LHLHWGTQAW (186 aa)) constitute a GATase cobBQ-type domain. Residue Cys325 is the Nucleophile of the active site.

Belongs to the CobB/CbiA family. Mg(2+) is required as a cofactor.

The enzyme catalyses cob(II)yrinate + 2 L-glutamine + 2 ATP + 2 H2O = cob(II)yrinate a,c diamide + 2 L-glutamate + 2 ADP + 2 phosphate + 2 H(+). Its pathway is cofactor biosynthesis; adenosylcobalamin biosynthesis; cob(II)yrinate a,c-diamide from sirohydrochlorin (anaerobic route): step 10/10. Its function is as follows. Catalyzes the ATP-dependent amidation of the two carboxylate groups at positions a and c of cobyrinate, using either L-glutamine or ammonia as the nitrogen source. The chain is Cobyrinate a,c-diamide synthase from Gloeobacter violaceus (strain ATCC 29082 / PCC 7421).